Here is a 213-residue protein sequence, read N- to C-terminus: Probable nicotinate-nucleotide adenylyltransferase (213 aa).

A disordered region spans residues 194–213; the sequence is RKPNNGEAKDGDVKDEEAVR. The span at 200–213 shows a compositional bias: basic and acidic residues; the sequence is EAKDGDVKDEEAVR.

It belongs to the NadD family.

The catalysed reaction is nicotinate beta-D-ribonucleotide + ATP + H(+) = deamido-NAD(+) + diphosphate. The protein operates within cofactor biosynthesis; NAD(+) biosynthesis; deamido-NAD(+) from nicotinate D-ribonucleotide: step 1/1. Catalyzes the reversible adenylation of nicotinate mononucleotide (NaMN) to nicotinic acid adenine dinucleotide (NaAD). In Mycolicibacterium smegmatis (strain ATCC 700084 / mc(2)155) (Mycobacterium smegmatis), this protein is Probable nicotinate-nucleotide adenylyltransferase.